Consider the following 252-residue polypeptide: MRIDVISLFPEFIAQCAAFGVVGRAQERGLLELKGWNPRDHAQGNYRRVDDRPFGGGPGMVMLIEPLRACLEVAQAADARPAPVIYLSPQGRPLTQPLARELAQLPRMVLLCGRYEGVDERFLDQAVDMEISIGDYVLSGGELGAAVLVDVVTRLQDGVLNDAESAAQDSFEGPQGLLDCPHYSHPSSHAWGDVPEVLRSGNHGAIARWRRQQSLGRTWLRRPELLDEATLDKQDRRLLEEFRRELAPGDEK.

Residues Gly113 and 133 to 138 each bind S-adenosyl-L-methionine; that span reads IGDYVL.

It belongs to the RNA methyltransferase TrmD family. In terms of assembly, homodimer.

It localises to the cytoplasm. It catalyses the reaction guanosine(37) in tRNA + S-adenosyl-L-methionine = N(1)-methylguanosine(37) in tRNA + S-adenosyl-L-homocysteine + H(+). Specifically methylates guanosine-37 in various tRNAs. The chain is tRNA (guanine-N(1)-)-methyltransferase from Xanthomonas campestris pv. campestris (strain 8004).